A 26-amino-acid chain; its full sequence is ECKWYLGTCSKDGDCCKHLQCHSNYE.

Disulfide bonds link Cys2–Cys16 and Cys9–Cys21.

Belongs to the neurotoxin 10 (Hwtx-1) family. 17 (Hntx-9) subfamily. As to expression, expressed by the venom gland.

It is found in the secreted. Ion channel inhibitor. The polypeptide is Hainantoxin F1-31.97 (Cyriopagopus hainanus (Chinese bird spider)).